The sequence spans 329 residues: Putative dehydrogenase RB0419 (329 aa).

It belongs to the ornithine cyclodeaminase/mu-crystallin family.

The chain is Putative dehydrogenase RB0419 from Rhizobium meliloti (strain 1021) (Ensifer meliloti).